We begin with the raw amino-acid sequence, 833 residues long: Leucine--tRNA ligase (833 aa).

The 'HIGH' region signature appears at 41 to 52; sequence PYPSGAGLHVGH. A 'KMSKS' region motif is present at residues 610–614; the sequence is KMSKS. K613 contacts ATP.

Belongs to the class-I aminoacyl-tRNA synthetase family.

It is found in the cytoplasm. It catalyses the reaction tRNA(Leu) + L-leucine + ATP = L-leucyl-tRNA(Leu) + AMP + diphosphate. The polypeptide is Leucine--tRNA ligase (Streptococcus pyogenes serotype M5 (strain Manfredo)).